The sequence spans 126 residues: Holo-[acyl-carrier-protein] synthase (126 aa).

Residues Asp8 and Glu57 each coordinate Mg(2+).

The protein belongs to the P-Pant transferase superfamily. AcpS family. It depends on Mg(2+) as a cofactor.

The protein localises to the cytoplasm. The enzyme catalyses apo-[ACP] + CoA = holo-[ACP] + adenosine 3',5'-bisphosphate + H(+). Functionally, transfers the 4'-phosphopantetheine moiety from coenzyme A to a Ser of acyl-carrier-protein. In Vibrio cholerae serotype O1 (strain ATCC 39315 / El Tor Inaba N16961), this protein is Holo-[acyl-carrier-protein] synthase.